A 310-amino-acid polypeptide reads, in one-letter code: Glycine--tRNA ligase alpha subunit (310 aa).

It belongs to the class-II aminoacyl-tRNA synthetase family. Tetramer of two alpha and two beta subunits.

Its subcellular location is the cytoplasm. It carries out the reaction tRNA(Gly) + glycine + ATP = glycyl-tRNA(Gly) + AMP + diphosphate. This Agrobacterium fabrum (strain C58 / ATCC 33970) (Agrobacterium tumefaciens (strain C58)) protein is Glycine--tRNA ligase alpha subunit.